The primary structure comprises 119 residues: Large ribosomal subunit protein bL20 (119 aa).

The protein belongs to the bacterial ribosomal protein bL20 family.

Its function is as follows. Binds directly to 23S ribosomal RNA and is necessary for the in vitro assembly process of the 50S ribosomal subunit. It is not involved in the protein synthesizing functions of that subunit. In Shewanella amazonensis (strain ATCC BAA-1098 / SB2B), this protein is Large ribosomal subunit protein bL20.